Here is an 87-residue protein sequence, read N- to C-terminus: MYCLQWLLPVLLIPKPLNPALWFNHSMFMGFYLLSFLLERKPCTICALVFLAALFLICYSCWGNCFLYHCHDSPLPDSAHDPSIVGT.

2 consecutive transmembrane segments (helical) span residues 19 to 39 (PALW…FLLE) and 43 to 63 (CTIC…SCWG).

Belongs to the BLCAP family.

It is found in the cytoplasm. The protein localises to the nucleus. Its subcellular location is the membrane. In terms of biological role, acts as a tumor suppressor; induces growth arrest at G(1)/S checkpoint and apoptosis via RB1-dependent and p53/TP53- and NF-kappa-B-independent mechanisms. Modulates expression of genes involved in the regulation of proliferation, cell cycle and apoptosis. This Danio rerio (Zebrafish) protein is Apoptosis inducing factor BLCAP (blcap).